A 36-amino-acid chain; its full sequence is Thrombin-like enzyme TLP (36 aa).

A Peptidase S1 domain is found at 1 to 36 (IGGFECNEHEHRSLVYLYNSAGFFCAGTLLNHEWVV).

The protein belongs to the peptidase S1 family. Snake venom subfamily. Monomer. As to expression, expressed by the venom gland.

It localises to the secreted. Its function is as follows. Thrombin-like snake venom serine protease. Shows strong hydrolytic activity towards Boc-Asp(oBzl)-Pro-Arg-MCA, a synthetic substrate for thrombin. In Naja naja (Indian cobra), this protein is Thrombin-like enzyme TLP.